A 32-amino-acid polypeptide reads, in one-letter code: MSDIN-like toxin proprotein 1 (32 aa).

Positions 1-10 (MSDINATCLP) are excised as a propeptide. The cyclopeptide (Ala-Pro) cross-link spans 11 to 17 (AWLALCP). A propeptide spanning residues 18-32 (CVGDDVNPTLTRGGT) is cleaved from the precursor.

It belongs to the MSDIN fungal toxin family. Post-translationally, processed by the macrocyclase-peptidase enzyme POPB to yield a toxic cyclic heptapeptide. POPB first removes 10 residues from the N-terminus. Conformational trapping of the remaining peptide forces the enzyme to release this intermediate rather than proceed to macrocyclization. The enzyme rebinds the remaining peptide in a different conformation and catalyzes macrocyclization of the N-terminal 7 residues.

Functionally, probable toxin that belongs to the MSDIN-like toxin family responsible for a large number of food poisoning cases and deaths. This Amanita fuligineoides protein is MSDIN-like toxin proprotein 1.